Reading from the N-terminus, the 182-residue chain is Large ribosomal subunit protein uL10 (182 aa).

It belongs to the universal ribosomal protein uL10 family. In terms of assembly, part of the ribosomal stalk of the 50S ribosomal subunit. The N-terminus interacts with L11 and the large rRNA to form the base of the stalk. The C-terminus forms an elongated spine to which L12 dimers bind in a sequential fashion forming a multimeric L10(L12)X complex.

Forms part of the ribosomal stalk, playing a central role in the interaction of the ribosome with GTP-bound translation factors. The protein is Large ribosomal subunit protein uL10 of Leptothrix cholodnii (strain ATCC 51168 / LMG 8142 / SP-6) (Leptothrix discophora (strain SP-6)).